Consider the following 249-residue polypeptide: 2,3-bisphosphoglycerate-dependent phosphoglycerate mutase (249 aa).

Residues 9 to 16 (RHGQSQWN), 22 to 23 (TG), Arg61, 88 to 91 (ERHY), Lys99, 115 to 116 (RR), and 184 to 185 (GN) contribute to the substrate site. His10 functions as the Tele-phosphohistidine intermediate in the catalytic mechanism. The Proton donor/acceptor role is filled by Glu88.

Belongs to the phosphoglycerate mutase family. BPG-dependent PGAM subfamily. Homodimer.

It catalyses the reaction (2R)-2-phosphoglycerate = (2R)-3-phosphoglycerate. It functions in the pathway carbohydrate degradation; glycolysis; pyruvate from D-glyceraldehyde 3-phosphate: step 3/5. In terms of biological role, catalyzes the interconversion of 2-phosphoglycerate and 3-phosphoglycerate. This is 2,3-bisphosphoglycerate-dependent phosphoglycerate mutase from Xanthomonas oryzae pv. oryzae (strain MAFF 311018).